Here is a 571-residue protein sequence, read N- to C-terminus: DNA primase (571 aa).

The CHC2-type zinc finger occupies 20-44 (CPFHKEKTPSFQVDTEKGYYHCFGC). The Toprim domain occupies 229–309 (AELVVVEGYM…KFRVRATSVP (81 aa)). Mg(2+) contacts are provided by E235, D280, and D282.

This sequence belongs to the DnaG primase family. As to quaternary structure, monomer. Interacts with DnaB. Requires Zn(2+) as cofactor. The cofactor is Mg(2+).

It catalyses the reaction ssDNA + n NTP = ssDNA/pppN(pN)n-1 hybrid + (n-1) diphosphate.. Functionally, RNA polymerase that catalyzes the synthesis of short RNA molecules used as primers for DNA polymerase during DNA replication. The chain is DNA primase from Deinococcus radiodurans (strain ATCC 13939 / DSM 20539 / JCM 16871 / CCUG 27074 / LMG 4051 / NBRC 15346 / NCIMB 9279 / VKM B-1422 / R1).